A 229-amino-acid polypeptide reads, in one-letter code: Thiamine-phosphate synthase (229 aa).

4-amino-2-methyl-5-(diphosphooxymethyl)pyrimidine-binding positions include 38–42 (QFREK) and Asn-73. Positions 74 and 93 each coordinate Mg(2+). Ser-111 serves as a coordination point for 4-amino-2-methyl-5-(diphosphooxymethyl)pyrimidine. 137–139 (TLS) contributes to the 2-[(2R,5Z)-2-carboxy-4-methylthiazol-5(2H)-ylidene]ethyl phosphate binding site. Lys-140 contributes to the 4-amino-2-methyl-5-(diphosphooxymethyl)pyrimidine binding site. 2-[(2R,5Z)-2-carboxy-4-methylthiazol-5(2H)-ylidene]ethyl phosphate-binding positions include Gly-169 and 189 to 190 (IS).

Belongs to the thiamine-phosphate synthase family. Mg(2+) is required as a cofactor.

The enzyme catalyses 2-[(2R,5Z)-2-carboxy-4-methylthiazol-5(2H)-ylidene]ethyl phosphate + 4-amino-2-methyl-5-(diphosphooxymethyl)pyrimidine + 2 H(+) = thiamine phosphate + CO2 + diphosphate. It carries out the reaction 2-(2-carboxy-4-methylthiazol-5-yl)ethyl phosphate + 4-amino-2-methyl-5-(diphosphooxymethyl)pyrimidine + 2 H(+) = thiamine phosphate + CO2 + diphosphate. It catalyses the reaction 4-methyl-5-(2-phosphooxyethyl)-thiazole + 4-amino-2-methyl-5-(diphosphooxymethyl)pyrimidine + H(+) = thiamine phosphate + diphosphate. It functions in the pathway cofactor biosynthesis; thiamine diphosphate biosynthesis; thiamine phosphate from 4-amino-2-methyl-5-diphosphomethylpyrimidine and 4-methyl-5-(2-phosphoethyl)-thiazole: step 1/1. Condenses 4-methyl-5-(beta-hydroxyethyl)thiazole monophosphate (THZ-P) and 2-methyl-4-amino-5-hydroxymethyl pyrimidine pyrophosphate (HMP-PP) to form thiamine monophosphate (TMP). This Streptococcus suis (strain 98HAH33) protein is Thiamine-phosphate synthase.